The chain runs to 475 residues: Exodeoxyribonuclease 7 large subunit (475 aa).

This sequence belongs to the XseA family. Heterooligomer composed of large and small subunits.

The protein resides in the cytoplasm. The enzyme catalyses Exonucleolytic cleavage in either 5'- to 3'- or 3'- to 5'-direction to yield nucleoside 5'-phosphates.. Bidirectionally degrades single-stranded DNA into large acid-insoluble oligonucleotides, which are then degraded further into small acid-soluble oligonucleotides. This is Exodeoxyribonuclease 7 large subunit from Bartonella henselae (strain ATCC 49882 / DSM 28221 / CCUG 30454 / Houston 1) (Rochalimaea henselae).